Consider the following 199-residue polypeptide: N-(5'-phosphoribosyl)anthranilate isomerase (199 aa).

Belongs to the TrpF family.

It catalyses the reaction N-(5-phospho-beta-D-ribosyl)anthranilate = 1-(2-carboxyphenylamino)-1-deoxy-D-ribulose 5-phosphate. Its pathway is amino-acid biosynthesis; L-tryptophan biosynthesis; L-tryptophan from chorismate: step 3/5. This Streptococcus pneumoniae serotype 19F (strain G54) protein is N-(5'-phosphoribosyl)anthranilate isomerase.